Consider the following 79-residue polypeptide: UPF0180 protein BCAH187_A1552 (79 aa).

It belongs to the UPF0180 family.

The chain is UPF0180 protein BCAH187_A1552 from Bacillus cereus (strain AH187).